The sequence spans 290 residues: Small ribosomal subunit biogenesis GTPase RsgA (290 aa).

One can recognise a CP-type G domain in the interval 62–213 (KNSLVRPPIV…IADTPGFSSL (152 aa)). Residues 111 to 114 (SKMD) and 156 to 164 (GQTGVGKST) each bind GTP. Zn(2+) contacts are provided by C237, C242, H244, and C250.

This sequence belongs to the TRAFAC class YlqF/YawG GTPase family. RsgA subfamily. In terms of assembly, monomer. Associates with 30S ribosomal subunit, binds 16S rRNA. It depends on Zn(2+) as a cofactor.

The protein resides in the cytoplasm. Its function is as follows. One of several proteins that assist in the late maturation steps of the functional core of the 30S ribosomal subunit. Helps release RbfA from mature subunits. May play a role in the assembly of ribosomal proteins into the subunit. Circularly permuted GTPase that catalyzes slow GTP hydrolysis, GTPase activity is stimulated by the 30S ribosomal subunit. The sequence is that of Small ribosomal subunit biogenesis GTPase RsgA from Streptococcus pyogenes serotype M6 (strain ATCC BAA-946 / MGAS10394).